The following is a 304-amino-acid chain: Ferrochelatase (304 aa).

The Fe cation site is built by H169 and E241.

Belongs to the ferrochelatase family.

Its subcellular location is the cytoplasm. It catalyses the reaction heme b + 2 H(+) = protoporphyrin IX + Fe(2+). It functions in the pathway porphyrin-containing compound metabolism; protoheme biosynthesis; protoheme from protoporphyrin-IX: step 1/1. Its function is as follows. Catalyzes the ferrous insertion into protoporphyrin IX. The polypeptide is Ferrochelatase (Thermoplasma volcanium (strain ATCC 51530 / DSM 4299 / JCM 9571 / NBRC 15438 / GSS1)).